The sequence spans 108 residues: Thiosulfate sulfurtransferase GlpE (108 aa).

The 89-residue stretch at 18–106 (ENEGATLADI…WERSGLPIET (89 aa)) folds into the Rhodanese domain. Residue Cys-66 is the Cysteine persulfide intermediate of the active site.

This sequence belongs to the GlpE family.

The protein localises to the cytoplasm. It carries out the reaction thiosulfate + hydrogen cyanide = thiocyanate + sulfite + 2 H(+). The catalysed reaction is thiosulfate + [thioredoxin]-dithiol = [thioredoxin]-disulfide + hydrogen sulfide + sulfite + 2 H(+). Functionally, transferase that catalyzes the transfer of sulfur from thiosulfate to thiophilic acceptors such as cyanide or dithiols. May function in a CysM-independent thiosulfate assimilation pathway by catalyzing the conversion of thiosulfate to sulfite, which can then be used for L-cysteine biosynthesis. The chain is Thiosulfate sulfurtransferase GlpE from Actinobacillus pleuropneumoniae serotype 7 (strain AP76).